The chain runs to 213 residues: Ribonuclease HII (213 aa).

Residues 20-209 enclose the RNase H type-2 domain; that stretch reads ELVAGVDEVG…VRQAYEALEG (190 aa). Aspartate 26, glutamate 27, and aspartate 118 together coordinate a divalent metal cation.

It belongs to the RNase HII family. It depends on Mn(2+) as a cofactor. The cofactor is Mg(2+).

It is found in the cytoplasm. It catalyses the reaction Endonucleolytic cleavage to 5'-phosphomonoester.. In terms of biological role, endonuclease that specifically degrades the RNA of RNA-DNA hybrids. The protein is Ribonuclease HII of Pseudomonas fluorescens (strain Pf0-1).